A 347-amino-acid chain; its full sequence is N6-Methyl-AMP deaminase-L (347 aa).

H19 and H21 together coordinate Zn(2+). Residues H21, N23, H69, 101-104, D142, and G175 contribute to the N(6)-methyl-AMP site; that span reads STPR. H202 lines the Zn(2+) pocket. Positions 205, 283, and 284 each coordinate N(6)-methyl-AMP. The active-site Proton donor is E205. A Zn(2+)-binding site is contributed by D283.

Belongs to the metallo-dependent hydrolases superfamily. Adenosine and AMP deaminases family. Monomer. The cofactor is Zn(2+).

The enzyme catalyses N(6)-methyl-AMP + H2O + H(+) = IMP + methylamine. In terms of biological role, catalyzes the hydrolysis of the free cytosolic methylated adenosine nucleotide N(6)-methyl-AMP (N6-mAMP) to produce inositol monophosphate (IMP) and methylamine. Is required for the catabolism of cytosolic N6-mAMP, which is derived from the degradation of mRNA containing N6-methylated adenine (m6A). This is N6-Methyl-AMP deaminase-L (mapda.L) from Xenopus laevis (African clawed frog).